The chain runs to 160 residues: UPF0260 protein Rleg2_0895 (160 aa).

It belongs to the UPF0260 family.

The polypeptide is UPF0260 protein Rleg2_0895 (Rhizobium leguminosarum bv. trifolii (strain WSM2304)).